Consider the following 346-residue polypeptide: Tryptophan--tRNA ligase (346 aa).

ATP is bound by residues 21 to 23 and 30 to 31; these read QPT and GN. Positions 22–31 match the 'HIGH' region motif; sequence PTADSYHLGN. Asp-147 contributes to the L-tryptophan binding site. ATP is bound by residues 159–161, Ile-198, and 207–211; these read GED and KMSKS. Positions 207-211 match the 'KMSKS' region motif; sequence KMSKS.

The protein belongs to the class-I aminoacyl-tRNA synthetase family. Homodimer.

It is found in the cytoplasm. The enzyme catalyses tRNA(Trp) + L-tryptophan + ATP = L-tryptophyl-tRNA(Trp) + AMP + diphosphate + H(+). Catalyzes the attachment of tryptophan to tRNA(Trp). This Corynebacterium efficiens (strain DSM 44549 / YS-314 / AJ 12310 / JCM 11189 / NBRC 100395) protein is Tryptophan--tRNA ligase.